The sequence spans 137 residues: Fructose-bisphosphate aldolase C (137 aa).

Lys3 functions as the Schiff-base intermediate with dihydroxyacetone-P in the catalytic mechanism.

Belongs to the class I fructose-bisphosphate aldolase family. Homotetramer.

The catalysed reaction is beta-D-fructose 1,6-bisphosphate = D-glyceraldehyde 3-phosphate + dihydroxyacetone phosphate. It functions in the pathway carbohydrate degradation; glycolysis; D-glyceraldehyde 3-phosphate and glycerone phosphate from D-glucose: step 4/4. The protein is Fructose-bisphosphate aldolase C (ALDOC) of Gallus gallus (Chicken).